We begin with the raw amino-acid sequence, 171 residues long: NADH-quinone oxidoreductase subunit I (171 aa).

4Fe-4S ferredoxin-type domains lie at 41–71 (LTRD…LQKT) and 81–110 (EFFR…LTPD). [4Fe-4S] cluster-binding residues include Cys51, Cys54, Cys57, Cys61, Cys90, Cys93, Cys96, and Cys100.

It belongs to the complex I 23 kDa subunit family. NDH-1 is composed of 14 different subunits. Subunits NuoA, H, J, K, L, M, N constitute the membrane sector of the complex. [4Fe-4S] cluster serves as cofactor.

The protein resides in the cell inner membrane. The catalysed reaction is a quinone + NADH + 5 H(+)(in) = a quinol + NAD(+) + 4 H(+)(out). NDH-1 shuttles electrons from NADH, via FMN and iron-sulfur (Fe-S) centers, to quinones in the respiratory chain. The immediate electron acceptor for the enzyme in this species is believed to be ubiquinone. Couples the redox reaction to proton translocation (for every two electrons transferred, four hydrogen ions are translocated across the cytoplasmic membrane), and thus conserves the redox energy in a proton gradient. This is NADH-quinone oxidoreductase subunit I from Methylococcus capsulatus (strain ATCC 33009 / NCIMB 11132 / Bath).